Reading from the N-terminus, the 500-residue chain is Probable cytosol aminopeptidase (500 aa).

The Mn(2+) site is built by Lys-265 and Asp-270. The active site involves Lys-277. Asp-288, Asp-347, and Glu-349 together coordinate Mn(2+). Arg-351 is a catalytic residue.

Belongs to the peptidase M17 family. Requires Mn(2+) as cofactor.

It is found in the cytoplasm. The enzyme catalyses Release of an N-terminal amino acid, Xaa-|-Yaa-, in which Xaa is preferably Leu, but may be other amino acids including Pro although not Arg or Lys, and Yaa may be Pro. Amino acid amides and methyl esters are also readily hydrolyzed, but rates on arylamides are exceedingly low.. It carries out the reaction Release of an N-terminal amino acid, preferentially leucine, but not glutamic or aspartic acids.. Presumably involved in the processing and regular turnover of intracellular proteins. Catalyzes the removal of unsubstituted N-terminal amino acids from various peptides. The protein is Probable cytosol aminopeptidase of Bdellovibrio bacteriovorus (strain ATCC 15356 / DSM 50701 / NCIMB 9529 / HD100).